Consider the following 359-residue polypeptide: Phosphatidylglycerol--prolipoprotein diacylglyceryl transferase (359 aa).

4 helical membrane passes run 24–44 (VALR…IVWG), 58–78 (VLDI…LYHV), 98–118 (VWQG…GAWI), and 124–144 (GIPL…AQAI). Residue arginine 146 participates in a 1,2-diacyl-sn-glycero-3-phospho-(1'-sn-glycerol) binding. 3 consecutive transmembrane segments (helical) span residues 193–213 (FVVH…VLLL), 222–243 (IGHG…FWIE), and 258–278 (VNSF…FAAT). The interval 284 to 359 (PAELRPADGG…IDSKKDDAND (76 aa)) is disordered. The segment covering 306-323 (IAQKEPEKNVEDAGKDEG) has biased composition (basic and acidic residues). Residues 336-349 (ASTASTGGEAGTKT) show a composition bias toward low complexity. Over residues 350 to 359 (IDSKKDDAND) the composition is skewed to basic and acidic residues.

It belongs to the Lgt family.

Its subcellular location is the cell membrane. The catalysed reaction is L-cysteinyl-[prolipoprotein] + a 1,2-diacyl-sn-glycero-3-phospho-(1'-sn-glycerol) = an S-1,2-diacyl-sn-glyceryl-L-cysteinyl-[prolipoprotein] + sn-glycerol 1-phosphate + H(+). It functions in the pathway protein modification; lipoprotein biosynthesis (diacylglyceryl transfer). In terms of biological role, catalyzes the transfer of the diacylglyceryl group from phosphatidylglycerol to the sulfhydryl group of the N-terminal cysteine of a prolipoprotein, the first step in the formation of mature lipoproteins. This is Phosphatidylglycerol--prolipoprotein diacylglyceryl transferase from Rhodococcus jostii (strain RHA1).